The primary structure comprises 141 residues: Vasotocin-neurophysin VT (141 aa).

Cysteines 1 and 6 form a disulfide. Gly9 is subject to Glycine amide. 7 disulfides stabilise this stretch: Cys22/Cys66, Cys25/Cys39, Cys33/Cys56, Cys40/Cys46, Cys73/Cys85, Cys79/Cys97, and Cys86/Cys91. Asn117 carries N-linked (GlcNAc...) asparagine glycosylation.

Belongs to the vasopressin/oxytocin family. In terms of processing, seven disulfide bonds are present in neurophysin.

It is found in the secreted. Vasotocin is an antidiuretic hormone. In Pelophylax lessonae (Pool frog), this protein is Vasotocin-neurophysin VT.